The following is a 117-amino-acid chain: Holo-[acyl-carrier-protein] synthase (117 aa).

Positions 8 and 58 each coordinate Mg(2+).

This sequence belongs to the P-Pant transferase superfamily. AcpS family. The cofactor is Mg(2+).

The protein resides in the cytoplasm. The enzyme catalyses apo-[ACP] + CoA = holo-[ACP] + adenosine 3',5'-bisphosphate + H(+). Functionally, transfers the 4'-phosphopantetheine moiety from coenzyme A to a Ser of acyl-carrier-protein. The sequence is that of Holo-[acyl-carrier-protein] synthase from Enterococcus faecalis (strain ATCC 700802 / V583).